The following is a 481-amino-acid chain: Glutamate--tRNA ligase (481 aa).

The short motif at 28-38 is the 'HIGH' region element; the sequence is PSPTGFLHLGG. The segment covering 139–148 has biased composition (basic and acidic residues); sequence RYDGTWRPEP. The tract at residues 139–159 is disordered; it reads RYDGTWRPEPGKTLPPVPADR. Positions 260–264 match the 'KMSKS' region motif; it reads KLSKR. Lysine 263 is an ATP binding site.

It belongs to the class-I aminoacyl-tRNA synthetase family. Glutamate--tRNA ligase type 1 subfamily. Monomer.

It localises to the cytoplasm. It catalyses the reaction tRNA(Glu) + L-glutamate + ATP = L-glutamyl-tRNA(Glu) + AMP + diphosphate. Functionally, catalyzes the attachment of glutamate to tRNA(Glu) in a two-step reaction: glutamate is first activated by ATP to form Glu-AMP and then transferred to the acceptor end of tRNA(Glu). This is Glutamate--tRNA ligase from Bordetella parapertussis (strain 12822 / ATCC BAA-587 / NCTC 13253).